The primary structure comprises 176 residues: MILIIYAHPYPHHSHANKQMLEQAGTLENVEIRSLYHLYPDFNIDVAAEQEALSRASLIVWQHPMQWYSVPPLLKLWMDKVLTHGWAYGHGGTALHGKHLLWAVTTGGGENHFTIGSHPGFDVLSQPLQATALYCGLKWLPPFSMHCTFICDDDTLQAQARQYKQRLLAWQEVNHG.

FMN is bound by residues histidine 8, 14–17 (SHAN), 65–68 (MQWY), and 105–108 (TTGG).

The protein belongs to the NAD(P)H dehydrogenase (quinone) family. KefF subfamily. In terms of assembly, homodimer. Interacts with KefC. FMN is required as a cofactor.

The protein resides in the cell inner membrane. The enzyme catalyses a quinone + NADH + H(+) = a quinol + NAD(+). The catalysed reaction is a quinone + NADPH + H(+) = a quinol + NADP(+). Its function is as follows. Regulatory subunit of a potassium efflux system that confers protection against electrophiles. Required for full activity of KefC. Shows redox enzymatic activity, but this enzymatic activity is not required for activation of KefC. This chain is Glutathione-regulated potassium-efflux system ancillary protein KefF, found in Salmonella dublin (strain CT_02021853).